Reading from the N-terminus, the 182-residue chain is Large ribosomal subunit protein bL25 (182 aa).

This sequence belongs to the bacterial ribosomal protein bL25 family. CTC subfamily. Part of the 50S ribosomal subunit; part of the 5S rRNA/L5/L18/L25 subcomplex. Contacts the 5S rRNA. Binds to the 5S rRNA independently of L5 and L18.

This is one of the proteins that binds to the 5S RNA in the ribosome where it forms part of the central protuberance. This Borreliella burgdorferi (strain ZS7) (Borrelia burgdorferi) protein is Large ribosomal subunit protein bL25.